We begin with the raw amino-acid sequence, 109 residues long: Enhancer of rudimentary homolog (109 aa).

Belongs to the E(R) family. Homodimer.

In terms of biological role, may have a role in the cell cycle. The chain is Enhancer of rudimentary homolog from Arabidopsis thaliana (Mouse-ear cress).